A 295-amino-acid polypeptide reads, in one-letter code: MEIRWLEGFIAVAEELHFSNAAIRLGMPQSPLSQLIRRLESELGQKLFDRSTRSVELTAAGRAFLPHARGIVASAAVAREAVNAAEGEIVGVVRIGFSGVLNYSTLPLLTSEVHKRLPNVELELVGQKLTREAVSLLRLGALDITLMGLPIEDPEIETRLISLEEFCVVLPKDHRLAGEDVVDLVDLAEDGFVTTPEFAGSVFRNSTFQLCAEAGFVPRISQQVNDPYMALLLVGAGVGVAITTHGTGLLAPPNTVHLPIKQHSVELRHGIAWMKGSGRVARDAVIDIALDIFKP.

An HTH lysR-type domain is found at 1–58 (MEIRWLEGFIAVAEELHFSNAAIRLGMPQSPLSQLIRRLESELGQKLFDRSTRSVELT). Residues 18–37 (FSNAAIRLGMPQSPLSQLIR) constitute a DNA-binding region (H-T-H motif).

The protein belongs to the LysR transcriptional regulatory family.

Functionally, activates expression of the shikimate transporter ShiA in the presence of shikimate. Binds to the shiA promoter region. This chain is HTH-type transcriptional regulator ShiR, found in Corynebacterium glutamicum (strain R).